We begin with the raw amino-acid sequence, 588 residues long: Probable G-protein coupled receptor 162 (588 aa).

Over 1-17 (MARGGAGAEEASLRSNA) the chain is Extracellular. The helical transmembrane segment at 18–38 (LSWLACGLLALLANAWIILSI) threads the bilayer. Topologically, residues 39-49 (SAKQQKHKPLE) are cytoplasmic. The chain crosses the membrane as a helical span at residues 50 to 70 (LLLCFLAGTHILMAAVPLTTF). At 71-91 (AVVQLRRQASSDYDWNESICK) the chain is on the extracellular side. N86 carries N-linked (GlcNAc...) asparagine glycosylation. The helical transmembrane segment at 92-112 (VFVSTYYTLALATCFTVASLS) threads the bilayer. At 113–133 (YHRMWMVRWPVNYRLSNAKKQ) the chain is on the cytoplasmic side. The chain crosses the membrane as a helical span at residues 134 to 154 (ALHAVMGIWMVSFILSTLPSI). At 155–174 (GWHNNGERYYARGCQFIVSK) the chain is on the extracellular side. A helical transmembrane segment spans residues 175–195 (IGLGFGVCFSLLLLGGIVMGL). At 196-275 (VCVAITFYQT…SLQVTNLVSA (80 aa)) the chain is on the cytoplasmic side. Residues 276–296 (IVFLYDSLTGVPILVVSFFSL) form a helical membrane-spanning segment. The Extracellular portion of the chain corresponds to 297-303 (KSDSAPP). The chain crosses the membrane as a helical span at residues 304–324 (WMVLAVLWCSMAQTLLLPSFI). At 325 to 588 (WSCERYRADV…GNPIFPQLTL (264 aa)) the chain is on the cytoplasmic side. 2 positions are modified to phosphoserine: S413 and S435. 2 disordered regions span residues 445-474 (QSRA…AEGG) and 511-550 (ETPL…AVGL). The segment covering 530–546 (PLGLSPRRLSLGSPESR) has biased composition (low complexity).

This sequence belongs to the G-protein coupled receptor 1 family.

The protein resides in the cell membrane. Orphan receptor. The sequence is that of Probable G-protein coupled receptor 162 (GPR162) from Homo sapiens (Human).